Here is a 548-residue protein sequence, read N- to C-terminus: Glucose-6-phosphate isomerase 1 (548 aa).

Residue glutamate 353 is the Proton donor of the active site. Catalysis depends on residues histidine 384 and lysine 512.

This sequence belongs to the GPI family.

It localises to the cytoplasm. It catalyses the reaction alpha-D-glucose 6-phosphate = beta-D-fructose 6-phosphate. Its pathway is carbohydrate biosynthesis; gluconeogenesis. It functions in the pathway carbohydrate degradation; glycolysis; D-glyceraldehyde 3-phosphate and glycerone phosphate from D-glucose: step 2/4. In terms of biological role, catalyzes the reversible isomerization of glucose-6-phosphate to fructose-6-phosphate. The polypeptide is Glucose-6-phosphate isomerase 1 (Neisseria gonorrhoeae (strain ATCC 700825 / FA 1090)).